The following is a 440-amino-acid chain: Xylose isomerase (440 aa).

Residues His-100 and Asp-103 contribute to the active site. Residues Glu-231, Glu-267, His-270, Asp-295, Asp-306, Asp-308, and Asp-338 each coordinate Mg(2+).

The protein belongs to the xylose isomerase family. In terms of assembly, homotetramer. Mg(2+) serves as cofactor.

Its subcellular location is the cytoplasm. It catalyses the reaction alpha-D-xylose = alpha-D-xylulofuranose. This is Xylose isomerase from Burkholderia thailandensis (strain ATCC 700388 / DSM 13276 / CCUG 48851 / CIP 106301 / E264).